The chain runs to 102 residues: Small ubiquitin-related modifier 1 (102 aa).

A Ubiquitin-like domain is found at 21–98 (DYIKLKVIGQ…IEVYQEQTGG (78 aa)). Gly98 participates in a covalent cross-link: Glycyl lysine isopeptide (Gly-Lys) (interchain with K-? in acceptor proteins). Positions 99-102 (HSTI) are excised as a propeptide.

It belongs to the ubiquitin family. SUMO subfamily. In terms of assembly, interacts with sae2, ube2i, ranbp2, pias1 and pias2. Interacts with sox9 and sox10. Covalently attached to a number of proteins. In terms of processing, cleavage of precursor form by a sentrin-specific protease is necessary for function.

It localises to the nucleus membrane. It is found in the nucleus speckle. Its subcellular location is the cytoplasm. The protein localises to the nucleus. The protein resides in the PML body. It localises to the cell membrane. Ubiquitin-like protein that can be covalently attached to proteins as a monomer or a lysine-linked polymer. Covalent attachment via an isopeptide bond to its substrates requires prior activation by the E1 complex sae1-sae2 and linkage to the E2 enzyme ube2i. This post-translational modification on lysine residues of proteins plays a crucial role in a number of cellular processes such as nuclear transport, DNA replication and repair, mitosis and signal transduction. Polymeric sumo1 chains are also susceptible to polyubiquitination which functions as a signal for proteasomal degradation of modified proteins. The polypeptide is Small ubiquitin-related modifier 1 (sumo1) (Xenopus tropicalis (Western clawed frog)).